Here is a 153-residue protein sequence, read N- to C-terminus: Endoribonuclease YbeY (153 aa).

The Zn(2+) site is built by histidine 114, histidine 118, and histidine 124.

This sequence belongs to the endoribonuclease YbeY family. Zn(2+) serves as cofactor.

The protein resides in the cytoplasm. In terms of biological role, single strand-specific metallo-endoribonuclease involved in late-stage 70S ribosome quality control and in maturation of the 3' terminus of the 16S rRNA. The polypeptide is Endoribonuclease YbeY (Shewanella baltica (strain OS195)).